Here is a 200-residue protein sequence, read N- to C-terminus: H-2 class I histocompatibility antigen, Q9 alpha chain (200 aa).

The first 21 residues, Met-1–Ala-21, serve as a signal peptide directing secretion. The interval Gly-22–Gly-111 is alpha-1. Over Gly-22–Leu-200 the chain is Extracellular. Residue Asn-107 is glycosylated (N-linked (GlcNAc...) asparagine). An alpha-2 region spans residues Gly-112–Leu-200. Residues Cys-122 and Cys-185 are joined by a disulfide bond.

It belongs to the MHC class I family. As to quaternary structure, heterodimer of an alpha chain and a beta chain (beta-2-microglobulin).

It is found in the membrane. Involved in the presentation of foreign antigens to the immune system. The polypeptide is H-2 class I histocompatibility antigen, Q9 alpha chain (H2-Q9) (Mus musculus (Mouse)).